The following is an 858-amino-acid chain: Transcription factor pytR (858 aa).

The disordered stretch occupies residues Met1–Leu35. Positions Cys39–Cys65 form a DNA-binding region, zn(2)-C6 fungal-type. The tract at residues Arg72–Gly99 is disordered.

The protein localises to the nucleus. Functionally, transcription factor that regulates the expression of the gene cluster that mediates the biosynthesis of Pyranterreones, a family of antioxidative compounds. The polypeptide is Transcription factor pytR (Aspergillus terreus (strain NIH 2624 / FGSC A1156)).